A 336-amino-acid polypeptide reads, in one-letter code: Flavonoid 4'-O-methyltransferase 3 (336 aa).

The S-adenosyl-L-methionine site is built by Tyr-140 and Asp-203. Catalysis depends on His-241, which acts as the Proton acceptor.

Belongs to the class I-like SAM-binding methyltransferase superfamily. Cation-independent O-methyltransferase family. In terms of assembly, homodimer. As to expression, expressed in leaves.

The enzyme catalyses scutellarein 7-methyl ether + S-adenosyl-L-methionine = ladanein + S-adenosyl-L-homocysteine + H(+). The catalysed reaction is cirsimaritin + S-adenosyl-L-methionine = salvigenin + S-adenosyl-L-homocysteine + H(+). It carries out the reaction cirsiliol + S-adenosyl-L-methionine = eupatorin + S-adenosyl-L-homocysteine + H(+). It catalyses the reaction genkwanin + S-adenosyl-L-methionine = apigenin 4',7-dimethyl ether + S-adenosyl-L-homocysteine. It participates in flavonoid metabolism. Its activity is regulated as follows. Substrate inhibition by genkwanin (GENK) at concentrations above 2.5 mM. Functionally, flavonoid 4'-O-methyltransferase involved in the biosynthesis of polymethoxylated flavonoids natural products such as nevadensin and salvigenin, aroma compounds which contribute to the flavor of sweet basil, and exhibit pharmacological activities such as anti-allergic, anti-oxidant, antibacterial, anti-proliferative, and anti-inflammatory effects. Catalyzes S-adenosylmethionine-dependent regioselective 4'-O-methylation of flavonoids; active on various hydroxylated flavonoid substrates, including scutellarein-7-methyl ether (SCU7Me) and cirsimaritin (CIRM), and, with a lower efficiency, hispidulin, ladanein (LAD), cirsioliol (CIRL) and genkwanin (GENK). This Ocimum basilicum (Sweet basil) protein is Flavonoid 4'-O-methyltransferase 3.